A 314-amino-acid polypeptide reads, in one-letter code: tRNA pseudouridine synthase B (314 aa).

His-43 serves as a coordination point for substrate. Asp-48 acts as the Nucleophile in catalysis. Substrate contacts are provided by Tyr-76, Tyr-179, and Leu-200.

Belongs to the pseudouridine synthase TruB family. Type 1 subfamily.

It carries out the reaction uridine(55) in tRNA = pseudouridine(55) in tRNA. Responsible for synthesis of pseudouridine from uracil-55 in the psi GC loop of transfer RNAs. This is tRNA pseudouridine synthase B from Cronobacter sakazakii (strain ATCC BAA-894) (Enterobacter sakazakii).